A 162-amino-acid polypeptide reads, in one-letter code: RNA pyrophosphohydrolase (162 aa).

The Nudix hydrolase domain maps to 7-149; sequence KYRPCVGIML…KKEVYKTVIE (143 aa). Positions 40–61 match the Nudix box motif; sequence GGVDDGEELEQAALRELLEEVG.

The protein belongs to the Nudix hydrolase family. RppH subfamily. It depends on a divalent metal cation as a cofactor.

Its function is as follows. Accelerates the degradation of transcripts by removing pyrophosphate from the 5'-end of triphosphorylated RNA, leading to a more labile monophosphorylated state that can stimulate subsequent ribonuclease cleavage. The chain is RNA pyrophosphohydrolase from Wolbachia sp. subsp. Drosophila simulans (strain wRi).